A 613-amino-acid polypeptide reads, in one-letter code: MIEVLLVTICFTVFPYQGSPIILESGNVNDYEVVYPQKVPALPKGGVQNPQPETKYEDTMQYEFHVNGEPVVLHLERNKGLFSEDYTETHYAPDGREITTSPPVQDHCYYHGYIQNEADSSAAISACDGLKGHFKHRGETYFIEPLKLSNSESHAIYKDEHVEKEDEIPKICGVTQTTSESDETIEKISQLTNTPEQDRYLQVKKYIELYVVVDNRMYRNYNSNRDAINERVYEMVNTLNVMYRPLNFFIALIGLEIWSNQDEINIEPEVAVTLRSFGEWRNTTLLPRKRNDNAQLLTGIDFNGATVGLAYVGTLCRPTQSVAVIQDHSKRTSMVASTMAHELGHNLGINHDSASCNCNAGPCIMSATISNQPLSEFSSCSVQEHQRYLLRVRPQCILNKPLRKDIVTPPVCGNYFVERGEECDCGSPQDCQSACCNATTCKLQHEAQCDSGECCEQCKFKKAGAECRAAKDDCDLPESCTGQSAKCPTDSFQRNGHPCQNNQGYCYNGKCLIMTNQCIALKGPGVNVSPDECFTLKQNDPECGFCRIENGTKIPCAEKDKMCGKLLCQEGNATCICFPTTDDPDYGMVEPGTKCGDGKVCINRQCVDVQTAY.

The signal sequence occupies residues 1-20 (MIEVLLVTICFTVFPYQGSP). Positions 21 to 191 (IILESGNVND…DETIEKISQL (171 aa)) are excised as a propeptide. The region spanning 205–401 (KYIELYVVVD…VRPQCILNKP (197 aa)) is the Peptidase M12B domain. Glutamate 208 serves as a coordination point for Ca(2+). The N-linked (GlcNAc...) asparagine glycan is linked to asparagine 282. Residue aspartate 292 participates in Ca(2+) binding. 3 disulfide bridges follow: cysteine 316-cysteine 396, cysteine 356-cysteine 380, and cysteine 358-cysteine 363. Zn(2+) contacts are provided by histidine 341, histidine 345, and histidine 351. Ca(2+)-binding residues include cysteine 396, asparagine 399, asparagine 414, phenylalanine 416, glutamate 418, glutamate 421, and aspartate 424. Residues 409–495 (PPVCGNYFVE…KCPTDSFQRN (87 aa)) form the Disintegrin domain. Disulfide bonds link cysteine 412/cysteine 441, cysteine 423/cysteine 436, cysteine 425/cysteine 431, cysteine 435/cysteine 458, cysteine 449/cysteine 455, cysteine 454/cysteine 480, cysteine 467/cysteine 487, cysteine 474/cysteine 506, cysteine 499/cysteine 511, cysteine 518/cysteine 568, cysteine 533/cysteine 575, cysteine 543/cysteine 577, cysteine 546/cysteine 556, cysteine 563/cysteine 601, and cysteine 595/cysteine 606. The N-linked (GlcNAc...) asparagine glycan is linked to asparagine 437. A D/ECD-tripeptide motif is present at residues 473–475 (DCD). Aspartate 475, leucine 476, glutamate 478, and aspartate 490 together coordinate Ca(2+). 2 N-linked (GlcNAc...) asparagine glycosylation sites follow: asparagine 550 and asparagine 572.

This sequence belongs to the venom metalloproteinase (M12B) family. P-III subfamily. Monomer. Zn(2+) is required as a cofactor. As to expression, expressed by the venom gland.

Its subcellular location is the secreted. Snake venom zinc metalloproteinase that may impair hemostasis in the prey. This chain is Zinc metalloproteinase-disintegrin-like MTP8, found in Drysdalia coronoides (White-lipped snake).